A 444-amino-acid polypeptide reads, in one-letter code: MLDLAFVRANLELVEARLRARGQNPAELLGDFAAVDQHRRERITEAEQLKATRNKLSEEVARLRKAKEDASAVMEETRQLKTKIEDLERAATEAEEQLRERMARIPNLPYEDVPTGASAEDNVEVKRWGTPREFDFAPKPHWELGEQLGILDFERAAKLSGARFAVYWAEGARLERALAAFMLDLHTREHGYTEVLPPLMVNSRSLFGTGQLPKFAEDLFRCEDGEPYQAGKYRENDHWLIPTAEVPLTNLFRDETLDDSQLSTSLVAHTSCFRSEAGSYGKDVRGIIRQHQFQKVELVKFTRPEDSAAEHEALTRHAETVLERLGLPYRRMLLCTGDMGFSSAKTYDLEVWLPGQQVYREISSCSNFDAFQARRAGIRYRPRGQGKSAHVHTLNGSGLAIGRTWLAILENYQQADGSVRIPEALIPYMGTEVIESRNVAQGAK.

Residue 243 to 245 (TAE) participates in L-serine binding. 274–276 (RSE) lines the ATP pocket. Glu-297 is a binding site for L-serine. 361-364 (EISS) provides a ligand contact to ATP. Ser-397 lines the L-serine pocket.

This sequence belongs to the class-II aminoacyl-tRNA synthetase family. Type-1 seryl-tRNA synthetase subfamily. In terms of assembly, homodimer. The tRNA molecule binds across the dimer.

It is found in the cytoplasm. The enzyme catalyses tRNA(Ser) + L-serine + ATP = L-seryl-tRNA(Ser) + AMP + diphosphate + H(+). The catalysed reaction is tRNA(Sec) + L-serine + ATP = L-seryl-tRNA(Sec) + AMP + diphosphate + H(+). The protein operates within aminoacyl-tRNA biosynthesis; selenocysteinyl-tRNA(Sec) biosynthesis; L-seryl-tRNA(Sec) from L-serine and tRNA(Sec): step 1/1. In terms of biological role, catalyzes the attachment of serine to tRNA(Ser). Is also able to aminoacylate tRNA(Sec) with serine, to form the misacylated tRNA L-seryl-tRNA(Sec), which will be further converted into selenocysteinyl-tRNA(Sec). The sequence is that of Serine--tRNA ligase from Acidobacterium capsulatum (strain ATCC 51196 / DSM 11244 / BCRC 80197 / JCM 7670 / NBRC 15755 / NCIMB 13165 / 161).